The sequence spans 440 residues: Thymidine phosphorylase (440 aa).

The protein belongs to the thymidine/pyrimidine-nucleoside phosphorylase family. In terms of assembly, homodimer.

It carries out the reaction thymidine + phosphate = 2-deoxy-alpha-D-ribose 1-phosphate + thymine. It participates in pyrimidine metabolism; dTMP biosynthesis via salvage pathway; dTMP from thymine: step 1/2. In terms of biological role, the enzymes which catalyze the reversible phosphorolysis of pyrimidine nucleosides are involved in the degradation of these compounds and in their utilization as carbon and energy sources, or in the rescue of pyrimidine bases for nucleotide synthesis. In Salmonella paratyphi A (strain ATCC 9150 / SARB42), this protein is Thymidine phosphorylase.